We begin with the raw amino-acid sequence, 615 residues long: 1-deoxy-D-xylulose-5-phosphate synthase (615 aa).

Thiamine diphosphate-binding positions include H76 and 117–119 (GHS). Mg(2+) is bound at residue D148. Residues 149-150 (GA), N177, Y284, and E365 contribute to the thiamine diphosphate site. Position 177 (N177) interacts with Mg(2+).

The protein belongs to the transketolase family. DXPS subfamily. In terms of assembly, homodimer. Mg(2+) serves as cofactor. The cofactor is thiamine diphosphate.

It carries out the reaction D-glyceraldehyde 3-phosphate + pyruvate + H(+) = 1-deoxy-D-xylulose 5-phosphate + CO2. It participates in metabolic intermediate biosynthesis; 1-deoxy-D-xylulose 5-phosphate biosynthesis; 1-deoxy-D-xylulose 5-phosphate from D-glyceraldehyde 3-phosphate and pyruvate: step 1/1. Functionally, catalyzes the acyloin condensation reaction between C atoms 2 and 3 of pyruvate and glyceraldehyde 3-phosphate to yield 1-deoxy-D-xylulose-5-phosphate (DXP). The sequence is that of 1-deoxy-D-xylulose-5-phosphate synthase from Francisella tularensis subsp. novicida (strain U112).